A 117-amino-acid chain; its full sequence is UPF0642 protein C32H8.05 (117 aa).

The segment at 39–117 (DQVNDLTKSS…SNFSKFLKKK (79 aa)) is disordered. Basic residues predominate over residues 93-106 (KWAKKHLKKGKRAK). The segment covering 107-117 (NSNFSKFLKKK) has biased composition (low complexity).

Belongs to the UPF0642 family.

The protein resides in the nucleus. It is found in the nucleolus. The protein is UPF0642 protein C32H8.05 of Schizosaccharomyces pombe (strain 972 / ATCC 24843) (Fission yeast).